A 354-amino-acid polypeptide reads, in one-letter code: Photosystem II protein D1 2 (354 aa).

Helical transmembrane passes span 29–46 (YIGW…TATT), 118–133 (HFLI…EWEL), and 142–156 (WIAV…AATA). Histidine 118 contacts chlorophyll a. Tyrosine 126 is a binding site for pheophytin a. Residues aspartate 170 and glutamate 189 each coordinate [CaMn4O5] cluster. The chain crosses the membrane as a helical span at residues 197 to 218 (FHQLGVAGVFGGALFSAMHGSL). Histidine 198 contributes to the chlorophyll a binding site. Residues histidine 215 and 264 to 265 (SF) each bind a quinone. Histidine 215 provides a ligand contact to Fe cation. Position 272 (histidine 272) interacts with Fe cation. A helical transmembrane segment spans residues 274 to 288 (FLAAWPVIGIWFTAL). [CaMn4O5] cluster contacts are provided by histidine 332, glutamate 333, aspartate 342, and alanine 344. Residues 345 to 354 (AVEVAPAVRG) constitute a propeptide that is removed on maturation.

The protein belongs to the reaction center PufL/M/PsbA/D family. As to quaternary structure, PSII is composed of 1 copy each of membrane proteins PsbA, PsbB, PsbC, PsbD, PsbE, PsbF, PsbH, PsbI, PsbJ, PsbK, PsbL, PsbM, PsbT, PsbX, PsbY, PsbZ, Psb30/Ycf12, peripheral proteins PsbO, CyanoQ (PsbQ), PsbU, PsbV and a large number of cofactors. It forms dimeric complexes. Requires The D1/D2 heterodimer binds P680, chlorophylls that are the primary electron donor of PSII, and subsequent electron acceptors. It shares a non-heme iron and each subunit binds pheophytin, quinone, additional chlorophylls, carotenoids and lipids. D1 provides most of the ligands for the Mn4-Ca-O5 cluster of the oxygen-evolving complex (OEC). There is also a Cl(-1) ion associated with D1 and D2, which is required for oxygen evolution. The PSII complex binds additional chlorophylls, carotenoids and specific lipids. as cofactor. Tyr-161 forms a radical intermediate that is referred to as redox-active TyrZ, YZ or Y-Z. In terms of processing, C-terminally processed by CtpA; processing is essential to allow assembly of the oxygen-evolving complex and thus photosynthetic growth.

Its subcellular location is the cellular thylakoid membrane. It catalyses the reaction 2 a plastoquinone + 4 hnu + 2 H2O = 2 a plastoquinol + O2. Functionally, photosystem II (PSII) is a light-driven water:plastoquinone oxidoreductase that uses light energy to abstract electrons from H(2)O, generating O(2) and a proton gradient subsequently used for ATP formation. It consists of a core antenna complex that captures photons, and an electron transfer chain that converts photonic excitation into a charge separation. The D1/D2 (PsbA/PsbD) reaction center heterodimer binds P680, the primary electron donor of PSII as well as several subsequent electron acceptors. The protein is Photosystem II protein D1 2 of Synechococcus sp. (strain JA-2-3B'a(2-13)) (Cyanobacteria bacterium Yellowstone B-Prime).